Consider the following 309-residue polypeptide: Aspartate carbamoyltransferase catalytic subunit (309 aa).

Arg-55 and Thr-56 together coordinate carbamoyl phosphate. Residue Lys-85 coordinates L-aspartate. Carbamoyl phosphate contacts are provided by Arg-106, His-135, and Gln-138. Residues Arg-168 and Arg-230 each coordinate L-aspartate. Carbamoyl phosphate is bound by residues Leu-268 and Pro-269.

The protein belongs to the aspartate/ornithine carbamoyltransferase superfamily. ATCase family. Heterododecamer (2C3:3R2) of six catalytic PyrB chains organized as two trimers (C3), and six regulatory PyrI chains organized as three dimers (R2).

The catalysed reaction is carbamoyl phosphate + L-aspartate = N-carbamoyl-L-aspartate + phosphate + H(+). The protein operates within pyrimidine metabolism; UMP biosynthesis via de novo pathway; (S)-dihydroorotate from bicarbonate: step 2/3. In terms of biological role, catalyzes the condensation of carbamoyl phosphate and aspartate to form carbamoyl aspartate and inorganic phosphate, the committed step in the de novo pyrimidine nucleotide biosynthesis pathway. This Aliivibrio fischeri (strain ATCC 700601 / ES114) (Vibrio fischeri) protein is Aspartate carbamoyltransferase catalytic subunit.